A 411-amino-acid polypeptide reads, in one-letter code: Dual-specificity RNA methyltransferase RlmN (411 aa).

Glutamate 125 acts as the Proton acceptor in catalysis. The region spanning 131–380 (EEGRGTLCIS…IRTPRGRDIL (250 aa)) is the Radical SAM core domain. A disulfide bridge links cysteine 138 with cysteine 383. 3 residues coordinate [4Fe-4S] cluster: cysteine 145, cysteine 149, and cysteine 152. S-adenosyl-L-methionine is bound by residues 209 to 210 (GE), serine 241, 263 to 265 (SLH), and asparagine 340. Cysteine 383 functions as the S-methylcysteine intermediate in the catalytic mechanism.

The protein belongs to the radical SAM superfamily. RlmN family. The cofactor is [4Fe-4S] cluster.

The protein localises to the cytoplasm. It catalyses the reaction adenosine(2503) in 23S rRNA + 2 reduced [2Fe-2S]-[ferredoxin] + 2 S-adenosyl-L-methionine = 2-methyladenosine(2503) in 23S rRNA + 5'-deoxyadenosine + L-methionine + 2 oxidized [2Fe-2S]-[ferredoxin] + S-adenosyl-L-homocysteine. It carries out the reaction adenosine(37) in tRNA + 2 reduced [2Fe-2S]-[ferredoxin] + 2 S-adenosyl-L-methionine = 2-methyladenosine(37) in tRNA + 5'-deoxyadenosine + L-methionine + 2 oxidized [2Fe-2S]-[ferredoxin] + S-adenosyl-L-homocysteine. In terms of biological role, specifically methylates position 2 of adenine 2503 in 23S rRNA and position 2 of adenine 37 in tRNAs. m2A2503 modification seems to play a crucial role in the proofreading step occurring at the peptidyl transferase center and thus would serve to optimize ribosomal fidelity. This is Dual-specificity RNA methyltransferase RlmN from Brucella canis (strain ATCC 23365 / NCTC 10854 / RM-666).